The primary structure comprises 77 residues: Translation initiation factor IF-1, chloroplastic (77 aa).

One can recognise an S1-like domain in the interval 1–71 (MKEQKWIHEG…TRGRIIYRLR (71 aa)).

It belongs to the IF-1 family. Component of the 30S ribosomal translation pre-initiation complex which assembles on the 30S ribosome in the order IF-2 and IF-3, IF-1 and N-formylmethionyl-tRNA(fMet); mRNA recruitment can occur at any time during PIC assembly.

The protein resides in the plastid. It localises to the chloroplast. Its function is as follows. One of the essential components for the initiation of protein synthesis. Stabilizes the binding of IF-2 and IF-3 on the 30S subunit to which N-formylmethionyl-tRNA(fMet) subsequently binds. Helps modulate mRNA selection, yielding the 30S pre-initiation complex (PIC). Upon addition of the 50S ribosomal subunit IF-1, IF-2 and IF-3 are released leaving the mature 70S translation initiation complex. The chain is Translation initiation factor IF-1, chloroplastic from Daucus carota (Wild carrot).